A 363-amino-acid chain; its full sequence is GDSL esterase/lipase At2g24560 (363 aa).

The first 22 residues, 1–22, serve as a signal peptide directing secretion; the sequence is MSTSKTITFTLFIAALLSSCDA. Asparagine 25 carries an N-linked (GlcNAc...) asparagine glycan. Serine 41 (nucleophile) is an active-site residue. Residues asparagine 103 and asparagine 325 are each glycosylated (N-linked (GlcNAc...) asparagine). Active-site residues include aspartate 333 and histidine 336.

Belongs to the 'GDSL' lipolytic enzyme family.

The protein resides in the secreted. This Arabidopsis thaliana (Mouse-ear cress) protein is GDSL esterase/lipase At2g24560.